A 508-amino-acid polypeptide reads, in one-letter code: Lysine-specific permease LysP (508 aa).

12 consecutive transmembrane segments (helical) span residues 43–63, 66–86, 112–132, 144–164, 184–204, 219–239, 270–290, 314–334, 367–387, 393–413, 436–456, and 467–487; these read SMIA…GDVI, AGPF…YFLM, PAFG…TVAV, WLPD…VFSI, ITVV…IMGG, FVGG…LLVA, IFWR…AIIP, VGFS…VVSA, IPFI…LTSI, FTLL…GIAI, AKLF…VTLG, and WVQG…YLGY.

Belongs to the amino acid-polyamine-organocation (APC) superfamily. Amino acid transporter (AAT) (TC 2.A.3.1) family.

The protein resides in the cell membrane. The enzyme catalyses L-lysine(out) + H(+)(out) = L-lysine(in) + H(+)(in). Its function is as follows. Permease involved in lysine uptake. This chain is Lysine-specific permease LysP, found in Lactococcus lactis subsp. cremoris (strain MG1363).